A 676-amino-acid chain; its full sequence is Mediator of RNA polymerase II transcription subunit 17 (676 aa).

Disordered stretches follow at residues 27–68 and 117–176; these read IGSK…QFSN and IEND…TQDT. The span at 29–40 shows a compositional bias: low complexity; that stretch reads SKSTSPHSNSTS. Basic and acidic residues-rich tracts occupy residues 47-56 and 120-134; these read HNTENEEVDN and DNGK…KAED. Acidic residues predominate over residues 135-145; it reads GIDTMDIDQND. Over residues 146 to 160 the composition is skewed to polar residues; the sequence is NSEANTNDIGYNEWS.

The protein belongs to the Mediator complex subunit 17 family. In terms of assembly, component of the Mediator complex.

It is found in the nucleus. In terms of biological role, component of the Mediator complex, a coactivator involved in the regulated transcription of nearly all RNA polymerase II-dependent genes. Mediator functions as a bridge to convey information from gene-specific regulatory proteins to the basal RNA polymerase II transcription machinery. Mediator is recruited to promoters by direct interactions with regulatory proteins and serves as a scaffold for the assembly of a functional preinitiation complex with RNA polymerase II and the general transcription factors. The sequence is that of Mediator of RNA polymerase II transcription subunit 17 (SRB4) from Candida glabrata (strain ATCC 2001 / BCRC 20586 / JCM 3761 / NBRC 0622 / NRRL Y-65 / CBS 138) (Yeast).